A 457-amino-acid chain; its full sequence is Argininosuccinate lyase (457 aa).

Belongs to the lyase 1 family. Argininosuccinate lyase subfamily.

The protein localises to the cytoplasm. It carries out the reaction 2-(N(omega)-L-arginino)succinate = fumarate + L-arginine. It participates in amino-acid biosynthesis; L-arginine biosynthesis; L-arginine from L-ornithine and carbamoyl phosphate: step 3/3. This Escherichia coli O7:K1 (strain IAI39 / ExPEC) protein is Argininosuccinate lyase.